The primary structure comprises 664 residues: Cyclic nucleotide-gated channel alpha-2 (664 aa).

Positions 1–11 (MTEKTNGVKSS) are enriched in polar residues. A disordered region spans residues 1–49 (MTEKTNGVKSSPANNHNHHAPPAIKANGKDDHRTSSRPHSAADDDTSSE). The Cytoplasmic portion of the chain corresponds to 1-144 (MTEKTNGVKS…PAGDWYYCWL (144 aa)). Low complexity predominate over residues 12–23 (PANNHNHHAPPA). A helical membrane pass occupies residues 145-166 (FVIAMPVLYNWCLLVARACFSD). Residues 167–176 (LQKGYYLVWL) lie on the Extracellular side of the membrane. Residues 177–197 (VLDYVSDVVYIADLFIRLRTG) form a helical membrane-spanning segment. Residues 198–222 (FLEQGLLVKDTKKLRDNYIHTLQFK) are Cytoplasmic-facing. A helical transmembrane segment spans residues 223-241 (LDVASIIPTDLIYFAVDIH). Residues 242–246 (SPEVR) are Extracellular-facing. Residues 247–265 (FNRLLHFARMFEFFDRTET) traverse the membrane as a helical segment. Over 266–272 (RTNYPNI) the chain is Cytoplasmic. Residues 270 to 378 (PNIFRISNLV…GNVGSMISNM (109 aa)) are ion conduction pathway. The helical transmembrane segment at 273-296 (FRISNLVLYILVIIHWNACIYYAI) threads the bilayer. The Extracellular portion of the chain corresponds to 297–319 (SKSIGFGVDTWVYPNITDPEYGY). 2 helical membrane-spanning segments follow: residues 320–354 (LARE…LFVI) and 355–379 (FDFL…SNMN). The selectivity filter stretch occupies residues 337–340 (TIGE). Positions 380–456 (ATRAEFQAKI…STLKKVRIFH (77 aa)) are C-linker. Residues 380–664 (ATRAEFQAKI…SPELAAADEP (285 aa)) lie on the Cytoplasmic side of the membrane. The cyclic nucleotide-binding domain stretch occupies residues 460-580 (AGLLVELVLK…EERGREILMK (121 aa)). 3',5'-cyclic GMP contacts are provided by glycine 520, serine 523, arginine 536, and threonine 537. 3',5'-cyclic AMP is bound by residues arginine 536 and threonine 537. The stretch at 597–651 (VQEKLGQLETNMETLYTRFGRLLAEYTGAQQKLKQRITVLETKMKQNNEDDYLSD) forms a coiled coil. The interval 641 to 664 (KQNNEDDYLSDGMNSPELAAADEP) is disordered.

Belongs to the cyclic nucleotide-gated cation channel (TC 1.A.1.5) family. CNGA2 subfamily. In terms of assembly, the olfactory cyclic nucleotide-gated channel is an heterotetramer composed of CNGA2, CNGA4 and CNGB1b subunits with 2:1:1 stoichiometry.

The protein localises to the cell projection. It is found in the cilium membrane. The enzyme catalyses Ca(2+)(in) = Ca(2+)(out). The catalysed reaction is Na(+)(in) = Na(+)(out). It carries out the reaction K(+)(in) = K(+)(out). It catalyses the reaction NH4(+)(in) = NH4(+)(out). The enzyme catalyses Rb(+)(in) = Rb(+)(out). The catalysed reaction is Li(+)(in) = Li(+)(out). It carries out the reaction Cs(+)(in) = Cs(+)(out). Pore-forming subunit of the olfactory cyclic nucleotide-gated channel. Operates in the cilia of olfactory sensory neurons where chemical stimulation of the odorant is converted to an electrical signal. Mediates odorant-induced cAMP-dependent Ca(2+) influx triggering neuron depolarization. The rise of intracellular Ca(2+) levels potentiates the olfactory response by activating Ca(2+)-dependent Cl(-) channels, but it also serves as a negative feedback signal to desensitize the channel for rapid adaptation to odorants. Conducts cAMP- and cGMP-gated ion currents, with permeability for monovalent and divalent cations. The protein is Cyclic nucleotide-gated channel alpha-2 of Homo sapiens (Human).